The following is a 574-amino-acid chain: Multidrug and toxin extrusion protein 1 (574 aa).

At 1-51 (MEGQAAETNHRAETVVRAELCLSAEQGPETTAYSQKRCLFLPMEVWQEAQQ) the chain is on the cytoplasmic side. A helical transmembrane segment spans residues 52-72 (LLALAAPAFLSQLMIFLISIV). The Extracellular segment spans residues 73 to 86 (SSIFCGHLGKVELD). The chain crosses the membrane as a helical span at residues 87-107 (AVSLAITIINITGVAVGTGLA). Over 108–133 (GACDTLISQTFGGSNLKLVGIILQRG) the chain is Cytoplasmic. Residues 134–154 (ILILLLFCFPCWALLINTESI) form a helical membrane-spanning segment. Residues 155 to 168 (LLLFRQDPEVSKLT) are Extracellular-facing. A helical membrane pass occupies residues 169 to 189 (QIYVLIFLPALPAAFLYQLLA). The Cytoplasmic portion of the chain corresponds to 190–204 (KYLQNQGIIYPQVLT). Residues 205–225 (GFIANIFNALFNYILLYVLGL) traverse the membrane as a helical segment. Topologically, residues 226–230 (GVMGS) are extracellular. A helical transmembrane segment spans residues 231 to 251 (ACANTVSQFIQMILLFLYIVW). At 252-271 (RRLYADTWGGWSQACFEEWG) the chain is on the cytoplasmic side. The chain crosses the membrane as a helical span at residues 272-291 (AFIRLAVASMLMLCIEWWAF). The Extracellular portion of the chain corresponds to 292-309 (EISMFLAGVLGMVDLAAQ). The chain crosses the membrane as a helical span at residues 310–330 (AIIYQVAIVVYLIPLGLCIAG). Over 331–350 (SIRVGHGLGAGNTEQAKRSA) the chain is Cytoplasmic. A helical membrane pass occupies residues 351-371 (LVVLCMTELCALLSGILLATL). Over 372–384 (KDVVAYIFTSDPN) the chain is Extracellular. The chain crosses the membrane as a helical span at residues 385-405 (IVALVSYVLPVYSACLLFDAC). Topologically, residues 406-430 (VAACGGILRGSGKLKVGAISHTVGY) are cytoplasmic. The chain crosses the membrane as a helical span at residues 431 to 451 (YVIGLPLGISLMFAAKLGIIG). The Extracellular portion of the chain corresponds to 452 to 453 (FW). The chain crosses the membrane as a helical span at residues 454 to 472 (FGILACGIAQSIFLIIFVF). Over 473–549 (KIDWKRASEE…AGAAQHTRTL (77 aa)) the chain is Cytoplasmic. Residues 500–541 (KPSVYQEGCPTEQGDVDPGNVESIEFSQSSTSSEGTSPTPAG) are disordered. Residues 521–538 (ESIEFSQSSTSSEGTSPT) are compositionally biased toward low complexity. A helical transmembrane segment spans residues 550-570 (ILTRGLALGCAVGTLIIGIVI). Topologically, residues 571 to 574 (RLSV) are extracellular.

Belongs to the multi antimicrobial extrusion (MATE) (TC 2.A.66.1) family.

It localises to the cell membrane. The protein localises to the apical cell membrane. It carries out the reaction thiamine(out) + H(+)(in) = thiamine(in) + H(+)(out). The enzyme catalyses estrone 3-sulfate(in) + H(+)(out) = estrone 3-sulfate(out) + H(+)(in). It catalyses the reaction creatinine(in) + H(+)(out) = creatinine(out) + H(+)(in). The catalysed reaction is agmatine(in) + H(+)(out) = agmatine(out) + H(+)(in). In terms of biological role, multidrug efflux pump that functions as a H(+)/organic cation antiporter. Mediates the secretion of cationic compounds including drugs, toxins and endogenous metabolites. Plays a role physiological role in the excretion of drugs, toxins and endogenous metabolites through the kidney and liver, into urine and bile respectively. The protein is Multidrug and toxin extrusion protein 1 (slc47a1) of Xenopus tropicalis (Western clawed frog).